A 113-amino-acid polypeptide reads, in one-letter code: DIVMTQAVFSNPVTLGTSASISCRSSKSLLHSNGITYLYWYLQKPGQSPQLLLYQMSNLASGVPDRFSSSGSGTDFTLRISRVEAEDVGVYYCAHNLELPYTFGGGTKLEIKR.

Residues 1-23 form a framework-1 region; sequence DIVMTQAVFSNPVTLGTSASISC. Cysteines 23 and 93 form a disulfide. The interval 24 to 39 is complementarity-determining-1; the sequence is RSSKSLLHSNGITYLY. The framework-2 stretch occupies residues 40 to 54; it reads WYLQKPGQSPQLLLY. A complementarity-determining-2 region spans residues 55–61; the sequence is QMSNLAS. Residues 62-93 form a framework-3 region; that stretch reads GVPDRFSSSGSGTDFTLRISRVEAEDVGVYYC. Residues 94-102 are complementarity-determining-3; it reads AHNLELPYT. Positions 103 to 112 are framework-4; the sequence is FGGGTKLEIK.

In terms of biological role, anti-streptococcal group A carbohydrate antibody. The chain is Ig kappa chain V-II region 17S29.1 from Mus musculus (Mouse).